Consider the following 455-residue polypeptide: uncharacterized protein (455 aa).

Transmembrane regions (helical) follow at residues 26–46, 53–73, 77–97, 111–131, 146–166, 191–211, 232–252, 256–276, 278–298, 323–343, and 357–377; these read FGPG…QLLI, GAWG…ISIG, LGVM…RSTA, WVVA…LAVI, ALRA…TGVW, AAGV…SLVV, LTVL…AIAV, AHIG…IPAL, ILAA…LIVG, LLVA…GGGG, and ALVL…VVIA. The segment at 384–455 is disordered; sequence PKRLRPAPPV…LSDEPPPRAD (72 aa).

The protein localises to the cell membrane. This is an uncharacterized protein from Mycobacterium tuberculosis (strain CDC 1551 / Oshkosh).